The following is a 647-amino-acid chain: Glutamyl-tRNA(Gln) amidotransferase subunit B, mitochondrial (647 aa).

Residues M1 to L16 constitute a mitochondrion transit peptide. Residues P39–R77 are disordered. Over residues N58 to S76 the composition is skewed to low complexity.

It belongs to the GatB/GatE family. GatB subfamily. As to quaternary structure, subunit of the heterotrimeric GatCAB amidotransferase (AdT) complex, composed of A, B and C subunits.

It is found in the mitochondrion. It catalyses the reaction L-glutamyl-tRNA(Gln) + L-glutamine + ATP + H2O = L-glutaminyl-tRNA(Gln) + L-glutamate + ADP + phosphate + H(+). Its function is as follows. Allows the formation of correctly charged Gln-tRNA(Gln) through the transamidation of misacylated Glu-tRNA(Gln) in the mitochondria. The reaction takes place in the presence of glutamine and ATP through an activated gamma-phospho-Glu-tRNA(Gln). This Mycosarcoma maydis (Corn smut fungus) protein is Glutamyl-tRNA(Gln) amidotransferase subunit B, mitochondrial.